A 550-amino-acid polypeptide reads, in one-letter code: Protein UshA (550 aa).

Positions 1–25 (MKFLKRGVALALLAAFALTTQPAQA) are cleaved as a signal peptide. Zn(2+)-binding residues include Asp41, His43, Asp84, Asn116, His217, His252, and Gln254. Cys258 and Cys275 are joined by a disulfide. Substrate contacts are provided by residues Phe429 and 498–504 (FNATGGD).

It belongs to the 5'-nucleotidase family. Monomer. Zn(2+) is required as a cofactor.

Its subcellular location is the periplasm. It catalyses the reaction UDP-sugar + H2O = UMP + alpha-D-aldose 1-phosphate.. The catalysed reaction is a ribonucleoside 5'-phosphate + H2O = a ribonucleoside + phosphate. In terms of biological role, degradation of external UDP-glucose to uridine monophosphate and glucose-1-phosphate, which can then be used by the cell. The chain is Protein UshA (ushA) from Salmonella pullorum.